A 440-amino-acid polypeptide reads, in one-letter code: Tumor necrosis factor receptor superfamily member 10B (440 aa).

2 disordered regions span residues 1 to 32 (MEQR…RPGP) and 60 to 84 (DLAP…CPPG). Positions 1-55 (MEQRGQNAPAASGARKRHGPGPREARGARPGPRVPKTLVLVVAAVLLLVSAESAL) are cleaved as a signal peptide. The Extracellular segment spans residues 56–210 (ITQQDLAPQQ…SPGTPASPCS (155 aa)). 3 TNFR-Cys repeats span residues 57–94 (TQQD…GRDC), 97–137 (CKYG…NTVC), and 138–178 (QCEE…DIEC). The segment covering 60–71 (DLAPQQRAAPQQ) has biased composition (low complexity). 7 disulfide bridges follow: Cys81–Cys94, Cys97–Cys113, Cys116–Cys129, Cys119–Cys137, Cys139–Cys153, Cys156–Cys170, and Cys160–Cys178. A TAPE repeat occupies 192–206 (PAVEETVTSSPGTPA). Residues 211-231 (LSGIIIGVTVAAVVLIVAVFV) traverse the membrane as a helical segment. Residues 232–440 (CKSLLWKKVL…LEGNADSAMS (209 aa)) lie on the Cytoplasmic side of the membrane. The Death domain occupies 339–422 (RQCFDDFADL…LAKQKIEDHL (84 aa)).

As to quaternary structure, monomer. Can interact with TRADD and RIPK1. Interacts with HCMV protein UL141; this interaction prevents TNFRSF10B cell surface expression. Two TNFRSF10B monomers interact with a UL141 homodimer. Three TNFRSF10B molecules interact with TNFSF10 homotrimer. In the absence of stimulation, interacts with BIRC2, DDX3X and GSK3B. The interaction with BIRC2 and DDX3X is further enhanced upon receptor stimulation and accompanied by DDX3X and BIRC2 cleavage. Post-translationally, (Microbial infection) Glycosylated on Arg residue by S.typhimurium protein Ssek3. In terms of tissue distribution, widely expressed in adult and fetal tissues; very highly expressed in tumor cell lines such as HeLaS3, K-562, HL-60, SW480, A-549 and G-361; highly expressed in heart, peripheral blood lymphocytes, liver, pancreas, spleen, thymus, prostate, ovary, uterus, placenta, testis, esophagus, stomach and throughout the intestinal tract; not detectable in brain.

Its subcellular location is the membrane. Its function is as follows. Receptor for the cytotoxic ligand TNFSF10/TRAIL. The adapter molecule FADD recruits caspase-8 to the activated receptor. The resulting death-inducing signaling complex (DISC) performs caspase-8 proteolytic activation which initiates the subsequent cascade of caspases (aspartate-specific cysteine proteases) mediating apoptosis. Promotes the activation of NF-kappa-B. Essential for ER stress-induced apoptosis. This chain is Tumor necrosis factor receptor superfamily member 10B (TNFRSF10B), found in Homo sapiens (Human).